A 479-amino-acid chain; its full sequence is NAC domain-containing protein 45 (479 aa).

Positions 6 to 157 (LPPGFRFHPT…AYALCRVFKK (152 aa)) constitute an NAC domain. Residues 105 to 163 (IGTKKTLVYYRGRAPHGIRTGWVMHEYRLDETECEPSAYGMQDAYALCRVFKKIVIEAK) mediate DNA binding.

As to expression, expressed in a few sieve element cells before enucleation and in phloem-pole pericycle cells.

The protein resides in the nucleus. Its function is as follows. Transcription factor directing sieve element enucleation and cytosol degradation. Not required for formation of lytic vacuoles. Regulates, with NAC086, the transcription of NEN1, NEN2, NEN3, NEN4, RTM1, RTM2, UBP16, PLDZETA, ABCB10 and At1g26450. The sequence is that of NAC domain-containing protein 45 from Arabidopsis thaliana (Mouse-ear cress).